The sequence spans 465 residues: GDNF family receptor alpha-1 (465 aa).

An N-terminal signal peptide occupies residues 1 to 24; that stretch reads MFLATLYFALPLLDLLLSAEVSGG. Repeat copies occupy residues 25-113, 150-238, and 239-342. Cysteines 36 and 42 form a disulfide. An N-linked (GlcNAc...) asparagine glycan is attached at Asn59. Intrachain disulfides connect Cys154/Cys214, Cys161/Cys167, Cys178/Cys192, Cys187/Cys233, Cys216/Cys221, Cys243/Cys313, Cys250/Cys256, Cys267/Cys285, Cys277/Cys337, and Cys315/Cys325. Asn347 and Asn406 each carry an N-linked (GlcNAc...) asparagine glycan. Ser429 carries the GPI-anchor amidated serine lipid modification. Residues 430 to 465 constitute a propeptide, removed in mature form; it reads HITTKSMAAPPSCGLSPLLVLVVTALSTLLSLTETS.

It belongs to the GDNFR family. Interacts with GDNF ligand and RET: forms a 2:2:2 ternary complex composed of GDNF ligand, GFRA1 and RET receptor. Interacts with SORL1, either alone or in complex with GDNF. Interaction between SORL1 and GFRA1 leads to GFRA1 internalization, but not degradation.

It localises to the cell membrane. Its subcellular location is the golgi apparatus. The protein localises to the trans-Golgi network. The protein resides in the endosome. It is found in the multivesicular body. In terms of biological role, coreceptor for GDNF, a neurotrophic factor that enhances survival and morphological differentiation of dopaminergic neurons and increases their high-affinity dopamine uptake. GDNF-binding leads to autophosphorylation and activation of the RET receptor. The polypeptide is GDNF family receptor alpha-1 (GFRA1) (Homo sapiens (Human)).